The chain runs to 307 residues: Urease accessory protein UreD (307 aa).

This sequence belongs to the UreD family. As to quaternary structure, ureD, UreF and UreG form a complex that acts as a GTP-hydrolysis-dependent molecular chaperone, activating the urease apoprotein by helping to assemble the nickel containing metallocenter of UreC. The UreE protein probably delivers the nickel.

It is found in the cytoplasm. Its function is as follows. Required for maturation of urease via the functional incorporation of the urease nickel metallocenter. The protein is Urease accessory protein UreD of Prochlorococcus marinus (strain NATL1A).